The sequence spans 469 residues: ATP synthase subunit beta (469 aa).

155-162 (GGAGVGKT) is a binding site for ATP.

Belongs to the ATPase alpha/beta chains family. As to quaternary structure, F-type ATPases have 2 components, CF(1) - the catalytic core - and CF(0) - the membrane proton channel. CF(1) has five subunits: alpha(3), beta(3), gamma(1), delta(1), epsilon(1). CF(0) has three main subunits: a(1), b(2) and c(9-12). The alpha and beta chains form an alternating ring which encloses part of the gamma chain. CF(1) is attached to CF(0) by a central stalk formed by the gamma and epsilon chains, while a peripheral stalk is formed by the delta and b chains.

It localises to the cell inner membrane. It carries out the reaction ATP + H2O + 4 H(+)(in) = ADP + phosphate + 5 H(+)(out). Functionally, produces ATP from ADP in the presence of a proton gradient across the membrane. The catalytic sites are hosted primarily by the beta subunits. The protein is ATP synthase subunit beta of Syntrophobacter fumaroxidans (strain DSM 10017 / MPOB).